Consider the following 615-residue polypeptide: Prickle planar cell polarity protein 3 (615 aa).

A compositionally biased stretch (basic residues) spans 1–12 (MFARGSRRRRSG). Residues 1–26 (MFARGSRRRRSGRAPPEAEDPDRGQP) form a disordered region. The region spanning 74 to 182 (SDFQRHSISD…IVRIFPVTIT (109 aa)) is the PET domain. 3 LIM zinc-binding domains span residues 184-249 (AICE…CLRP), 250-309 (RCQA…RHAE), and 310-373 (YCDG…SEPT). 2 disordered regions span residues 396–567 (ASFS…LGER) and 587–615 (TFNS…CIVA). Positions 405–415 (SETTTKGTSTE) are enriched in polar residues. A phosphoserine mark is found at Ser475 and Ser491. Basic residues predominate over residues 508–531 (PSRRRHHHHNHHHHHNRHPSRRRH). Low complexity predominate over residues 537 to 555 (GSGSDSESCSSSPSSSSSE). A compositionally biased stretch (basic and acidic residues) spans 606 to 615 (QARDKNCIVA).

The protein belongs to the prickle / espinas / testin family. In terms of assembly, interacts with VANGL2 via its C-terminus. The VANGL2-dependent membrane recruitment of PRICKLE3 is a prerequisite for its polarization. Interacts with WTIP. WTIP is involved in the recruitment of PRICKLE3 to the basal body. Interacts with MT-ATP8, a component of the mitochondrial complex V. Widely expressed.

Its subcellular location is the cytoplasm. It localises to the cell membrane. It is found in the mitochondrion. Its function is as follows. Involved in the planar cell polarity (PCP) pathway that is essential for the polarization of epithelial cells during morphogenetic processes, including gastrulation and neurulation. PCP is maintained by two molecular modules, the global and the core modules, PRICKLE3 being part of the core module. Distinct complexes of the core module segregate to opposite sides of the cell, where they interact with the opposite complex in the neighboring cell at or near the adherents junctions. Involved in the organization of the basal body. Involved in cilia growth and positioning. Required for proper assembly, stability, and function of mitochondrial membrane ATP synthase (mitochondrial complex V). This is Prickle planar cell polarity protein 3 from Homo sapiens (Human).